The sequence spans 412 residues: Multifunctional CCA protein (412 aa).

Residues Gly8 and Arg11 each contribute to the ATP site. CTP contacts are provided by Gly8 and Arg11. Mg(2+) is bound by residues Glu21 and Asp23. Residues Arg91, Arg137, and Arg140 each contribute to the ATP site. CTP is bound by residues Arg91, Arg137, and Arg140. In terms of domain architecture, HD spans 228–329; sequence CGIHTLMSLQ…WRLLQRLDVL (102 aa).

Belongs to the tRNA nucleotidyltransferase/poly(A) polymerase family. Bacterial CCA-adding enzyme type 1 subfamily. As to quaternary structure, monomer. Can also form homodimers and oligomers. Mg(2+) serves as cofactor. Ni(2+) is required as a cofactor.

It catalyses the reaction a tRNA precursor + 2 CTP + ATP = a tRNA with a 3' CCA end + 3 diphosphate. It carries out the reaction a tRNA with a 3' CCA end + 2 CTP + ATP = a tRNA with a 3' CCACCA end + 3 diphosphate. Catalyzes the addition and repair of the essential 3'-terminal CCA sequence in tRNAs without using a nucleic acid template. Adds these three nucleotides in the order of C, C, and A to the tRNA nucleotide-73, using CTP and ATP as substrates and producing inorganic pyrophosphate. tRNA 3'-terminal CCA addition is required both for tRNA processing and repair. Also involved in tRNA surveillance by mediating tandem CCA addition to generate a CCACCA at the 3' terminus of unstable tRNAs. While stable tRNAs receive only 3'-terminal CCA, unstable tRNAs are marked with CCACCA and rapidly degraded. This chain is Multifunctional CCA protein, found in Acinetobacter baumannii (strain ATCC 17978 / DSM 105126 / CIP 53.77 / LMG 1025 / NCDC KC755 / 5377).